Consider the following 636-residue polypeptide: Threonine--tRNA ligase (636 aa).

The TGS domain occupies 1 to 63; the sequence is MNEINVTLPD…ADGARVEIVT (63 aa). Positions 243 to 534 are catalytic; that stretch reads DHRKLGRELD…LIEHFAGNFP (292 aa). 3 residues coordinate Zn(2+): cysteine 335, histidine 386, and histidine 511.

The protein belongs to the class-II aminoacyl-tRNA synthetase family. In terms of assembly, homodimer. It depends on Zn(2+) as a cofactor.

Its subcellular location is the cytoplasm. It catalyses the reaction tRNA(Thr) + L-threonine + ATP = L-threonyl-tRNA(Thr) + AMP + diphosphate + H(+). In terms of biological role, catalyzes the attachment of threonine to tRNA(Thr) in a two-step reaction: L-threonine is first activated by ATP to form Thr-AMP and then transferred to the acceptor end of tRNA(Thr). Also edits incorrectly charged L-seryl-tRNA(Thr). This is Threonine--tRNA ligase from Geobacter sp. (strain M21).